We begin with the raw amino-acid sequence, 727 residues long: NADH-ubiquinone oxidoreductase 75 kDa subunit, mitochondrial (727 aa).

The transit peptide at 1–23 directs the protein to the mitochondrion; it reads MLRIPVRKALVGLSKSPKGCVRT. Positions 30-108 constitute a 2Fe-2S ferredoxin-type domain; it reads NLIEVFVDGQ…GWNILTNSEK (79 aa). The [2Fe-2S] cluster site is built by cysteine 64, cysteine 75, and cysteine 78. Lysine 84 is modified (N6-acetyllysine). Cysteine 92 is a [2Fe-2S] cluster binding site. Positions 108 to 147 constitute a 4Fe-4S His(Cys)3-ligated-type domain; that stretch reads KSKKAREGVMELLLANHPLDCPICDQGGECDLQDQSMMFG. Residues histidine 124, cysteine 128, cysteine 131, cysteine 137, cysteine 176, cysteine 179, cysteine 182, and cysteine 226 each coordinate [4Fe-4S] cluster. The region spanning 245-301 is the 4Fe-4S Mo/W bis-MGD-type domain; sequence TRKTESIDVMDAVGSNIVVSTRTGEVMRILPRMHEDINEEWISDKTRFAYDGLKRQR. N6-acetyllysine occurs at positions 467, 499, and 709.

This sequence belongs to the complex I 75 kDa subunit family. In terms of assembly, core subunit of respiratory chain NADH dehydrogenase (Complex I) which is composed of 45 different subunits. This is the largest subunit of complex I and it is a component of the iron-sulfur (IP) fragment of the enzyme. Complex I associates with ubiquinol-cytochrome reductase complex (Complex III) to form supercomplexes. Interacts with MDM2 and AKAP1. [2Fe-2S] cluster serves as cofactor. It depends on [4Fe-4S] cluster as a cofactor.

Its subcellular location is the mitochondrion inner membrane. The catalysed reaction is a ubiquinone + NADH + 5 H(+)(in) = a ubiquinol + NAD(+) + 4 H(+)(out). Functionally, core subunit of the mitochondrial membrane respiratory chain NADH dehydrogenase (Complex I) which catalyzes electron transfer from NADH through the respiratory chain, using ubiquinone as an electron acceptor. Essential for catalysing the entry and efficient transfer of electrons within complex I. Plays a key role in the assembly and stability of complex I and participates in the association of complex I with ubiquinol-cytochrome reductase complex (Complex III) to form supercomplexes. The polypeptide is NADH-ubiquinone oxidoreductase 75 kDa subunit, mitochondrial (NDUFS1) (Pongo abelii (Sumatran orangutan)).